Reading from the N-terminus, the 163-residue chain is Putative MucR family transcriptional regulatory protein RA0938 (163 aa).

The protein belongs to the ros/MucR family.

This is Putative MucR family transcriptional regulatory protein RA0938 from Rhizobium meliloti (strain 1021) (Ensifer meliloti).